The following is an 808-amino-acid chain: Digalactosyldiacylglycerol synthase 1, chloroplastic (808 aa).

The disordered stretch occupies residues 1–23 (MVKETLIPPSSTSMTTGTSSSSS). The N-terminal 58 residues, 1–58 (MVKETLIPPSSTSMTTGTSSSSSLSMTLSSTNALSFLSKGWREVWDSADADLQLMRDR), are a transit peptide targeting the chloroplast. Positions 10–23 (SSTSMTTGTSSSSS) are enriched in low complexity.

It belongs to the glycosyltransferase group 1 family. Glycosyltransferase 4 subfamily.

It is found in the plastid. The protein resides in the chloroplast outer membrane. The catalysed reaction is a 1,2-diacyl-3-O-(beta-D-galactosyl)-sn-glycerol + UDP-alpha-D-galactose = a 1,2-diacyl-3-O-[alpha-D-galactosyl-(1-&gt;6)-beta-D-galactosyl]-sn-glycerol + UDP + H(+). Functionally, involved in the synthesis of diacylglycerol galactolipids that are specifically found in thylakoid membranes. Specific for alpha-glycosidic linkages. Responsible for the final assembly of galactolipids in photosynthetic membranes. Digalactosyldiacylglycerol (DGDG) provides stability to the photosystem I (PSI) complex, especially to the PsaA, PsaB, PsaC, PsaL and PsaH subunits. This is Digalactosyldiacylglycerol synthase 1, chloroplastic from Arabidopsis thaliana (Mouse-ear cress).